The following is a 190-amino-acid chain: Ribosome maturation factor RimM (190 aa).

In terms of domain architecture, PRC barrel spans 95–177 (EDDEFFYTDL…AGLIDSPDDL (83 aa)). A disordered region spans residues 170 to 190 (LIDSPDDLTGKPPKPPGKTKE). Residues 181-190 (PPKPPGKTKE) are compositionally biased toward pro residues.

It belongs to the RimM family. In terms of assembly, binds ribosomal protein uS19.

It localises to the cytoplasm. In terms of biological role, an accessory protein needed during the final step in the assembly of 30S ribosomal subunit, possibly for assembly of the head region. Essential for efficient processing of 16S rRNA. May be needed both before and after RbfA during the maturation of 16S rRNA. It has affinity for free ribosomal 30S subunits but not for 70S ribosomes. This is Ribosome maturation factor RimM from Rhizobium rhizogenes (strain K84 / ATCC BAA-868) (Agrobacterium radiobacter).